Reading from the N-terminus, the 529-residue chain is Zinc finger protein 490 (529 aa).

The disordered stretch occupies residues 1–53 (MRRNSSLSFQMERPLEEQVQSKWSSSQGRTGTGGSDVLQMQNSEHHGQSIKTQ). The region spanning 57–132 (ISLEDVAVNF…ALCENKEDCP (76 aa)) is the KRAB domain. C2H2-type zinc fingers lie at residues 156–178 (CDCSVCGEVFMHQVSLNRHMRSH), 194–216 (HKCKECGKTFTRSSSIRTHERIH), 222–244 (YECKECGKAFAFLFSFRNHIRIH), 250–272 (YECKECGKAFRYLTALRRHEKNH), 278–300 (YKCKQCGKAFIYYQPFLTHERTH), 306–328 (YECKQCGKAFSCPTYLRSHEKTH), 334–356 (FVCRECGRAFFSHSSLRKHVKTH), 362–384 (YTCKKCGEAFKSSSSCEVHERTH), 390–412 (YECKQCGKAFNSSSYLQLHERVH), 418–440 (YECKECGKAFLYSTHFRIHERTH), 446–468 (YECKQCGRVFIYFSHLRRHERSH), 474–496 (CECKQCGKAFTCLNSLKVHKRIH), and 502–524 (FQCRQCGKAFSYSKSLHVHERTH).

This sequence belongs to the krueppel C2H2-type zinc-finger protein family.

The protein localises to the nucleus. Functionally, may be involved in transcriptional regulation. This chain is Zinc finger protein 490 (ZNF490), found in Homo sapiens (Human).